We begin with the raw amino-acid sequence, 692 residues long: Elongation factor G (692 aa).

In terms of domain architecture, tr-type G spans 8–282; it reads KDTRNIGIMA…AVLDYLPSPL (275 aa). Residues 17–24, 81–85, and 135–138 contribute to the GTP site; these read AHIDAGKT, DTPGH, and NKMD.

Belongs to the TRAFAC class translation factor GTPase superfamily. Classic translation factor GTPase family. EF-G/EF-2 subfamily.

The protein resides in the cytoplasm. Functionally, catalyzes the GTP-dependent ribosomal translocation step during translation elongation. During this step, the ribosome changes from the pre-translocational (PRE) to the post-translocational (POST) state as the newly formed A-site-bound peptidyl-tRNA and P-site-bound deacylated tRNA move to the P and E sites, respectively. Catalyzes the coordinated movement of the two tRNA molecules, the mRNA and conformational changes in the ribosome. This is Elongation factor G from Shouchella clausii (strain KSM-K16) (Alkalihalobacillus clausii).